Consider the following 612-residue polypeptide: Chaperone protein DnaK (612 aa).

Position 174 is a phosphothreonine; by autocatalysis (T174). Residues 578 to 612 (GAQAGAQGQGAAGGQKQDGNVYDADYKVVDDDKKE) form a disordered region. Basic and acidic residues predominate over residues 601-612 (ADYKVVDDDKKE).

Belongs to the heat shock protein 70 family.

In terms of biological role, acts as a chaperone. The sequence is that of Chaperone protein DnaK from Moorella thermoacetica (strain ATCC 39073 / JCM 9320).